The primary structure comprises 354 residues: Methionine aminotransferase BCAT4 (354 aa).

K198 is modified (N6-(pyridoxal phosphate)lysine).

Belongs to the class-IV pyridoxal-phosphate-dependent aminotransferase family. It depends on pyridoxal 5'-phosphate as a cofactor. Mostly expressed in phloem.

The protein localises to the cytoplasm. The enzyme catalyses a 2-oxocarboxylate + L-methionine = 4-methylsulfanyl-2-oxobutanoate + an L-alpha-amino acid. Functionally, converts 2-oxo acids to branched-chain amino acids. Shows activity with L-Leu, L-Ile and L-Val as amino donors and alpha-keto-glutarate as an amino acceptor, but no activity for D-isomers of Leu, Ile, Val, Asp, Glu or Ala. Acts on methionine and its derivatives and the corresponding 2-oxo acids. Catalyzes the initial deamination of methionine to 4-methylthio-2-oxobutyrate as well as the transamination of other typical intermediates of the methionine chain elongation pathway. The polypeptide is Methionine aminotransferase BCAT4 (BCAT4) (Arabidopsis thaliana (Mouse-ear cress)).